We begin with the raw amino-acid sequence, 258 residues long: uncharacterized protein (258 aa).

Residues 163–187 form a helical membrane-spanning segment; sequence GIVGAAGLMLMFADLNGIPGICLMG.

Its subcellular location is the membrane. This is an uncharacterized protein from Methanocaldococcus jannaschii (strain ATCC 43067 / DSM 2661 / JAL-1 / JCM 10045 / NBRC 100440) (Methanococcus jannaschii).